A 236-amino-acid chain; its full sequence is Alanyl-tRNA editing protein AlaX-M (236 aa).

Histidine 101, histidine 105, and histidine 205 together coordinate Zn(2+).

It belongs to the class-II aminoacyl-tRNA synthetase family. Editing domain AlaX-M subfamily. Zn(2+) is required as a cofactor.

The protein localises to the cytoplasm. Its function is as follows. Functions in trans to edit the amino acid moiety from incorrectly charged Ser-tRNA(Ala). This is Alanyl-tRNA editing protein AlaX-M (alaXM) from Saccharolobus solfataricus (strain ATCC 35092 / DSM 1617 / JCM 11322 / P2) (Sulfolobus solfataricus).